The chain runs to 354 residues: UDP-N-acetylglucosamine--N-acetylmuramyl-(pentapeptide) pyrophosphoryl-undecaprenol N-acetylglucosamine transferase (354 aa).

Residues 11-13, Arg-164, Ser-194, and Gln-289 each bind UDP-N-acetyl-alpha-D-glucosamine; that span reads TAG.

Belongs to the glycosyltransferase 28 family. MurG subfamily.

The protein localises to the cell membrane. The enzyme catalyses di-trans,octa-cis-undecaprenyl diphospho-N-acetyl-alpha-D-muramoyl-L-alanyl-D-glutamyl-meso-2,6-diaminopimeloyl-D-alanyl-D-alanine + UDP-N-acetyl-alpha-D-glucosamine = di-trans,octa-cis-undecaprenyl diphospho-[N-acetyl-alpha-D-glucosaminyl-(1-&gt;4)]-N-acetyl-alpha-D-muramoyl-L-alanyl-D-glutamyl-meso-2,6-diaminopimeloyl-D-alanyl-D-alanine + UDP + H(+). Its pathway is cell wall biogenesis; peptidoglycan biosynthesis. Cell wall formation. Catalyzes the transfer of a GlcNAc subunit on undecaprenyl-pyrophosphoryl-MurNAc-pentapeptide (lipid intermediate I) to form undecaprenyl-pyrophosphoryl-MurNAc-(pentapeptide)GlcNAc (lipid intermediate II). The protein is UDP-N-acetylglucosamine--N-acetylmuramyl-(pentapeptide) pyrophosphoryl-undecaprenol N-acetylglucosamine transferase of Clostridium botulinum (strain Langeland / NCTC 10281 / Type F).